Reading from the N-terminus, the 325-residue chain is MFFDSVTNGPEDVMYQVKAACDSDNDPSKIDLGVGTYRNEDGDYHELDVLKEIATVQTISGTGAIHIGAMFLARSATDVLPHVYVGTPTWGNYQPLLRLAGLEMRTYNHYLSQTGRVDFASVLSAIRTTPRGSTFILQGCCHNPTAADFSREQWDIVVAEMESHGHLPFFDIAYQGLGEGVDEDVYGVRLCADKGMEMVVCQSFAKNFGLYGERCGALHVVCTSDDVAARVKDQLRCLIRWEFSSSPAYGARLVNLVLSDARAEEQCLLPLSKTQCQELQNKFRIYAVPNGRITMSGLSQGNIDYAARAIDAVVRSGLEAREPTG.

Residue Gly35 participates in substrate binding. Pyridoxal 5'-phosphate is bound by residues 89 to 90, Asn143, Tyr174, and 203 to 205; these read TW and SFA. Residue Asn143 coordinates substrate. Position 206 is an N6-(pyridoxal phosphate)lysine (Lys206). Arg214 serves as a coordination point for pyridoxal 5'-phosphate.

The protein belongs to the class-I pyridoxal-phosphate-dependent aminotransferase family. In terms of assembly, homodimer. The cofactor is pyridoxal 5'-phosphate.

It functions in the pathway secondary metabolite biosynthesis. Aminotransferase; part of the gene cluster that mediates the biosynthesis of the tetramic acids Sch210971 and Sch210972, potential anti-HIV fungal natural product that contain a decalin core. The PKS module of tasS together with the enoylreductase tasC catalyze the formation of the polyketide unit which is then conjugated to 4-hydroxyl-4-methyl glutamate (HMG) by the condensation domain of the tasS NRPS module. One unique structural feature of Sch210971 and Sch210972 is the tetramic acid motif proposed to be derived from the non-proteinogenic amino acid HMG, by a Dieckmann-type condensation catalyzed by the reductase domain of tasS. The aldolase tasA catalyzes the aldol condensation of 2 molecules of pyruvic acid to yield the intermediate 4-hydroxyl-4-methyl-2-oxoglutarate (HMOG), which can then be stereoselectively transaminated, may be by tasG, to form HMG. The Diels-Alderase tas3 then uses the Dieckmann product of tasS as substrate and catalyzes the Diels-Alder cycloaddition to form the decalin ring of Sch210971 and Sch210972. In Hapsidospora irregularis, this protein is Aminotransferase tasG.